Reading from the N-terminus, the 670-residue chain is uncharacterized protein (670 aa).

Residues Pro-53–Pro-83 are disordered. A run of 27 repeats spans residues Ala-143–Thr-158, Ala-171–Thr-186, Ala-200–Pro-214, Ala-215–Pro-233, Ala-234–Pro-252, Ala-253–Thr-268, Thr-279–Pro-293, Ala-294–Thr-309, Thr-320–Pro-334, Ala-335–Pro-349, Ala-362–Pro-376, Ala-377–Pro-391, Ala-392–Pro-406, Ala-407–Pro-421, Ala-422–Pro-436, Ala-437–Thr-452, Val-464–Thr-477, Ala-478–Thr-493, Ala-504–Thr-517, Ala-518–Thr-531, Ala-532–Thr-545, Ala-546–Thr-559, Ala-560–Thr-573, Ala-574–Thr-587, Ala-588–Thr-601, Ala-602–Thr-615, and Ala-616–Thr-629. The interval Pro-187–Asn-225 is disordered. The segment covering Ala-205–Asn-225 has biased composition (low complexity). Residues Gly-339–Thr-395 form a disordered region. The segment covering Asp-342–Ala-362 has biased composition (polar residues). Low complexity predominate over residues Met-363–Thr-395. Low complexity-rich tracts occupy residues Gly-471 to Gly-482 and Thr-490 to Thr-503. Positions Gly-471 to Thr-503 are disordered. Positions Gly-525–Gly-634 are enriched in low complexity. The segment at Gly-525–Arg-670 is disordered. Residues Gly-638–Gly-654 are compositionally biased toward basic residues.

This is an uncharacterized protein from Ictalurid herpesvirus 1 (strain Auburn) (IcHV-1).